Consider the following 99-residue polypeptide: Cytochrome c oxidase subunit 4 isoform 1, mitochondrial (99 aa).

Topologically, residues 1-73 (SVVKREDFSL…TFAEMNRGSN (73 aa)) are mitochondrial matrix. Lys-4 carries the N6-acetyllysine; alternate modification. Lys-4 bears the N6-succinyllysine; alternate mark. At Lys-28 the chain carries N6-acetyllysine. Phosphoserine is present on residues Ser-31 and Ser-33. At Lys-35 the chain carries N6-acetyllysine; alternate. An N6-succinyllysine; alternate modification is found at Lys-35. An N6-acetyllysine modification is found at Lys-42. Residues 74 to 99 (EWKTVVGTATFFIGFTALIIMWQKRY) form a helical membrane-spanning segment.

It belongs to the cytochrome c oxidase IV family. In terms of assembly, component of the cytochrome c oxidase (complex IV, CIV), a multisubunit enzyme composed of 14 subunits. The complex is composed of a catalytic core of 3 subunits MT-CO1, MT-CO2 and MT-CO3, encoded in the mitochondrial DNA, and 11 supernumerary subunits COX4I, COX5A, COX5B, COX6A, COX6B, COX6C, COX7A, COX7B, COX7C, COX8 and NDUFA4, which are encoded in the nuclear genome. The complex exists as a monomer or a dimer and forms supercomplexes (SCs) in the inner mitochondrial membrane with NADH-ubiquinone oxidoreductase (complex I, CI) and ubiquinol-cytochrome c oxidoreductase (cytochrome b-c1 complex, complex III, CIII), resulting in different assemblies (supercomplex SCI(1)III(2)IV(1) and megacomplex MCI(2)III(2)IV(2)). Interacts with PHB2; the interaction decreases in absence of SPHK2. Interacts with AFG1L. Interacts with ABCB7; this interaction allows the regulation of cellular iron homeostasis and cellular reactive oxygen species (ROS) levels in cardiomyocytes. Interacts with FLVCR2; this interaction occurs in the absence of heme and is disrupted upon heme binding. Interacts with IRGC.

The protein resides in the mitochondrion inner membrane. The protein operates within energy metabolism; oxidative phosphorylation. Its function is as follows. Component of the cytochrome c oxidase, the last enzyme in the mitochondrial electron transport chain which drives oxidative phosphorylation. The respiratory chain contains 3 multisubunit complexes succinate dehydrogenase (complex II, CII), ubiquinol-cytochrome c oxidoreductase (cytochrome b-c1 complex, complex III, CIII) and cytochrome c oxidase (complex IV, CIV), that cooperate to transfer electrons derived from NADH and succinate to molecular oxygen, creating an electrochemical gradient over the inner membrane that drives transmembrane transport and the ATP synthase. Cytochrome c oxidase is the component of the respiratory chain that catalyzes the reduction of oxygen to water. Electrons originating from reduced cytochrome c in the intermembrane space (IMS) are transferred via the dinuclear copper A center (CU(A)) of subunit 2 and heme A of subunit 1 to the active site in subunit 1, a binuclear center (BNC) formed by heme A3 and copper B (CU(B)). The BNC reduces molecular oxygen to 2 water molecules using 4 electrons from cytochrome c in the IMS and 4 protons from the mitochondrial matrix. The chain is Cytochrome c oxidase subunit 4 isoform 1, mitochondrial (COX4I1) from Trachypithecus cristatus (Silvered leaf-monkey).